The sequence spans 618 residues: DNA mismatch repair protein MutL (618 aa).

The segment at 371 to 401 (AREPATPRYSGGASGGSGGRQSVGGWSHAQP) is disordered. Residues 382-392 (GASGGSGGRQS) show a composition bias toward gly residues.

Belongs to the DNA mismatch repair MutL/HexB family.

Functionally, this protein is involved in the repair of mismatches in DNA. It is required for dam-dependent methyl-directed DNA mismatch repair. May act as a 'molecular matchmaker', a protein that promotes the formation of a stable complex between two or more DNA-binding proteins in an ATP-dependent manner without itself being part of a final effector complex. The sequence is that of DNA mismatch repair protein MutL from Salmonella arizonae (strain ATCC BAA-731 / CDC346-86 / RSK2980).